The primary structure comprises 723 residues: Choline transporter-like protein 4 (723 aa).

The Cytoplasmic portion of the chain corresponds to 1–36 (MGKKKQEEEQNSSEYGAPAQYDPTFNGPIHKRSCTD). Residues 37–57 (IICCVLFMLVITGYMVVGILA) traverse the membrane as a helical segment. Residues 58-245 (WLYGDPRHVL…RIFEDFAKTW (188 aa)) are Extracellular-facing. Asn-71, Asn-202, Asn-211, and Asn-219 each carry an N-linked (GlcNAc...) asparagine glycan. The helical transmembrane segment at 246 to 266 (QWIVAGLVIAMVVSVLFLLLL) threads the bilayer. The Cytoplasmic portion of the chain corresponds to 267 to 269 (RFT). A helical transmembrane segment spans residues 270–290 (APVLIWILIFGVLAVGAFGIW). Over 291–325 (YCYNDYMSLASSNLTFSNVGFTTNVQVYLQVRDTW) the chain is Extracellular. A glycan (N-linked (GlcNAc...) asparagine) is linked at Asn-303. Residues 326-346 (LAFLIILCIVEAVLILALIFL) form a helical membrane-spanning segment. At 347-374 (RTRILIAIALIQETSKALGHMMSTLLYP) the chain is on the cytoplasmic side. The helical transmembrane segment at 375–395 (VVTFVLLLVCVSYWGITALYL) threads the bilayer. Over 396-464 (ATSGAPIYKV…RNLFNLQIYN (69 aa)) the chain is Extracellular. N-linked (GlcNAc...) asparagine glycans are attached at residues Asn-409, Asn-421, and Asn-430. A helical transmembrane segment spans residues 465–485 (VVAFLWCVNFVIALGHCTLAG). Residues 486 to 516 (AFASYYWAFSKPADIPTFPLTQSFMRALRYH) are Cytoplasmic-facing. A helical membrane pass occupies residues 517 to 537 (VGSLAFGALILTLVQIVRIIL). At 538–578 (EYLDHKFKAAQNPCARFLMCCLKCCFWCLEKFIKFINRNAY) the chain is on the extracellular side. A helical membrane pass occupies residues 579-599 (IMIAIYGKNFCVSAKNAFFLL). The Cytoplasmic segment spans residues 600–615 (MRNIVRVVVLDKVTDL). The chain crosses the membrane as a helical span at residues 616–636 (LLFFGKLLVVGGIGVLAFFFF). Topologically, residues 637–655 (SGRIQLPGNTFQTAALNYY) are extracellular. A helical membrane pass occupies residues 656–676 (WMPIITVVFGAYLIAHGFFSV). The Cytoplasmic segment spans residues 677-723 (YNMGVDTLFLCFLEDLERNDGSAEKPYFMSKNLMKILNKKNKQPKTG).

The protein belongs to the CTL (choline transporter-like) family.

It localises to the membrane. The protein resides in the apical cell membrane. It carries out the reaction choline(out) + n H(+)(in) = choline(in) + n H(+)(out). It catalyses the reaction thiamine diphosphate(out) = thiamine diphosphate(in). Choline transporter that seems to play a role in the choline-acetylcholine system and is required to the efferent innervation of hair cells in the olivocochlear bundle for the maintenance of physiological function of outer hair cells and the protection of hair cells from acoustic injury. Also described as a thiamine pyrophosphate transporter. This Danio rerio (Zebrafish) protein is Choline transporter-like protein 4 (slc44a4).